A 520-amino-acid polypeptide reads, in one-letter code: General transcription factor 3C polypeptide 5 (520 aa).

An N-acetylalanine modification is found at alanine 2. A disordered region spans residues 466–520 (LFSNTGKADRGKEQLMFESGEEEEEEEEEEEEEEEDFKPSDGSENEMETEILDYV). 2 stretches are compositionally biased toward acidic residues: residues 484–501 (SGEEEEEEEEEEEEEEED) and 508–520 (SENEMETEILDYV).

It belongs to the TFIIIC subunit 5 family. Part of the TFIIIC subcomplex TFIIIC2, consisting of six subunits, GTF3C1, GTF3C2, GTF3C3, GTF3C4, GTF3C5 and GTF3C6. Interacts with BRF1, GTF3C6 and TBP.

Its subcellular location is the nucleus. In terms of biological role, involved in RNA polymerase III-mediated transcription. Integral, tightly associated component of the DNA-binding TFIIIC2 subcomplex that directly binds tRNA and virus-associated RNA promoters. In Mus musculus (Mouse), this protein is General transcription factor 3C polypeptide 5 (Gtf3c5).